We begin with the raw amino-acid sequence, 55 residues long: Large ribosomal subunit protein bL33 (55 aa).

Belongs to the bacterial ribosomal protein bL33 family.

This Ruegeria sp. (strain TM1040) (Silicibacter sp.) protein is Large ribosomal subunit protein bL33.